A 223-amino-acid chain; its full sequence is MGKNEEVKLLGIWASPFSRRIEMALKLKGVPYEYLEEDLENKSSLLLALSPIHKKIPVLVHNGKTIIESHVILEYIDETWKHNPILPQDPFQRSKARVLAKLVDEKIVNVGFASLAKTEKGREVLIEQTRELIMCLEKELAGKDYFGGKTVGFLDFVAGSMIPFCLERAWEGMGVEMITEKKFPEYNKWVKKLKEVEIVVDCIPLREKHIEHMNNMAEKIRSA.

Positions 5 to 84 (EEVKLLGIWA…YIDETWKHNP (80 aa)) constitute a GST N-terminal domain. Glutathione-binding positions include 15–16 (SP), 41–42 (NK), 55–56 (KI), and 68–69 (ES). The 128-residue stretch at 89-216 (DPFQRSKARV…EKHIEHMNNM (128 aa)) folds into the GST C-terminal domain. Residue T150 is modified to Phosphothreonine.

This sequence belongs to the GST superfamily. Tau family.

Its subcellular location is the cytoplasm. The protein resides in the cytosol. The enzyme catalyses RX + glutathione = an S-substituted glutathione + a halide anion + H(+). Its function is as follows. May be involved in the conjugation of reduced glutathione to a wide number of exogenous and endogenous hydrophobic electrophiles and have a detoxification role against certain herbicides. This is Glutathione S-transferase U6 (GSTU6) from Arabidopsis thaliana (Mouse-ear cress).